Here is a 129-residue protein sequence, read N- to C-terminus: Small ribosomal subunit protein uS11 (129 aa).

This sequence belongs to the universal ribosomal protein uS11 family. In terms of assembly, part of the 30S ribosomal subunit. Interacts with proteins S7 and S18. Binds to IF-3.

Its function is as follows. Located on the platform of the 30S subunit, it bridges several disparate RNA helices of the 16S rRNA. Forms part of the Shine-Dalgarno cleft in the 70S ribosome. The chain is Small ribosomal subunit protein uS11 from Geobacillus stearothermophilus (Bacillus stearothermophilus).